The following is a 159-amino-acid chain: NADH-quinone oxidoreductase subunit B (159 aa).

Residues C32, C33, C97, and C126 each contribute to the [4Fe-4S] cluster site.

Belongs to the complex I 20 kDa subunit family. In terms of assembly, NDH-1 is composed of 14 different subunits. Subunits NuoB, C, D, E, F, and G constitute the peripheral sector of the complex. [4Fe-4S] cluster serves as cofactor.

It localises to the cell inner membrane. The catalysed reaction is a quinone + NADH + 5 H(+)(in) = a quinol + NAD(+) + 4 H(+)(out). In terms of biological role, NDH-1 shuttles electrons from NADH, via FMN and iron-sulfur (Fe-S) centers, to quinones in the respiratory chain. The immediate electron acceptor for the enzyme in this species is believed to be ubiquinone. Couples the redox reaction to proton translocation (for every two electrons transferred, four hydrogen ions are translocated across the cytoplasmic membrane), and thus conserves the redox energy in a proton gradient. This is NADH-quinone oxidoreductase subunit B from Helicobacter pylori (strain J99 / ATCC 700824) (Campylobacter pylori J99).